The chain runs to 638 residues: Probable potassium transport system protein Kup (638 aa).

Transmembrane regions (helical) follow at residues 25–45, 65–85, 114–134, 152–172, 184–204, 226–246, 262–282, 291–311, 352–372, 382–402, 410–430, and 434–454; these read LAIAAIGVVFGDIGTSPLYSL, VISLLFWAILLVVGVKYLLFV, AGALMALGIFGACMFYGDAVI, PHLSHLVLPITIVILIALFWI, FGPIMVLWFVVIAALGVYHIV, LLQAYVVLGSVVLVLTGAEAL, AYGLVMPSLVLNYFGQGALLI, PFFLLAPEWGLLPLVVLSTVA, IYVPVVNWLLLAVILCIVVGF, YGIAVTATMVITTVLACVVMV, LLVGAIIAVFLAIDLGFFGAN, and VAQGGWLPLGIGALLFFLLMT.

Belongs to the HAK/KUP transporter (TC 2.A.72) family.

It localises to the cell inner membrane. It carries out the reaction K(+)(in) + H(+)(in) = K(+)(out) + H(+)(out). Transport of potassium into the cell. Likely operates as a K(+):H(+) symporter. In Burkholderia cenocepacia (strain HI2424), this protein is Probable potassium transport system protein Kup.